A 161-amino-acid polypeptide reads, in one-letter code: DNA-binding protein inhibitor ID-4 (161 aa).

Positions 52 to 104 (AAEAAADEPALCLQCDMNDCYSRLRRLVPTIPPNKKVSKVEILPHVIDYILDL) constitute a bHLH domain. The interval 116 to 161 (RQPPPPAPPHHPAGTCPAAPPRTPLTALNTDPAGAVNKQGDSILCR) is disordered. Residues 117–126 (QPPPPAPPHH) are compositionally biased toward pro residues.

In terms of assembly, heterodimer with other HLH proteins.

It is found in the nucleus. Functionally, transcriptional regulator (lacking a basic DNA binding domain) which negatively regulates the basic helix-loop-helix (bHLH) transcription factors by forming heterodimers and inhibiting their DNA binding and transcriptional activity. Implicated in regulating a variety of cellular processes, including cellular growth, senescence, differentiation, apoptosis, angiogenesis, and neoplastic transformation. In Sus scrofa (Pig), this protein is DNA-binding protein inhibitor ID-4 (ID4).